The following is a 109-amino-acid chain: Small serum protein 2 (109 aa).

The signal sequence occupies residues 1 to 19; sequence MRVFFSLIIFSFMLATCQG. 5 cysteine pairs are disulfide-bonded: Cys-21-Cys-72, Cys-39-Cys-64, Cys-59-Cys-93, Cys-62-Cys-71, and Cys-84-Cys-107.

Forms a stable, non-covalent complex with serotriflin.

It localises to the secreted. Functionally, may serve as a self-defense protein against the toxic effects of the snake venom during accidental envenomation. Does not show inhibitory activity towards brevilysin H6. This Protobothrops flavoviridis (Habu) protein is Small serum protein 2.